The chain runs to 24 residues: Calreticulin (24 aa).

This sequence belongs to the calreticulin family. In terms of assembly, monomer. Component of an EIF2 complex at least composed of CELF1/CUGBP1, CALR, CALR3, EIF2S1, EIF2S2, HSP90B1 and HSPA5. Interacts with PDIA3/ERp57 and SPACA9. Interacts with TRIM21. Interacts with NR3C1. Interacts with PPIB. Interacts (via P-domain) with PDIA5. Interacts with CLCC1. As to expression, pancreas.

The protein resides in the endoplasmic reticulum lumen. It is found in the cytoplasm. The protein localises to the cytosol. It localises to the cytolytic granule. Its subcellular location is the secreted. The protein resides in the extracellular space. It is found in the extracellular matrix. The protein localises to the cell surface. It localises to the sarcoplasmic reticulum lumen. Its subcellular location is the cytoplasmic vesicle. The protein resides in the secretory vesicle. It is found in the cortical granule. Its function is as follows. Calcium-binding chaperone that promotes folding, oligomeric assembly and quality control in the endoplasmic reticulum (ER) via the calreticulin/calnexin cycle. This lectin interacts transiently with almost all of the monoglucosylated glycoproteins that are synthesized in the ER. Interacts with the DNA-binding domain of NR3C1 and mediates its nuclear export. Involved in maternal gene expression regulation. May participate in oocyte maturation via the regulation of calcium homeostasis. Present in the cortical granules of non-activated oocytes, is exocytosed during the cortical reaction in response to oocyte activation and might participate in the block to polyspermy. The polypeptide is Calreticulin (CALR) (Canis lupus familiaris (Dog)).